A 312-amino-acid polypeptide reads, in one-letter code: tRNA-cytidine(32) 2-sulfurtransferase (312 aa).

The short motif at 47-52 (SGGKDS) is the PP-loop motif element. [4Fe-4S] cluster-binding residues include cysteine 122, cysteine 125, and cysteine 213.

Belongs to the TtcA family. Homodimer. Requires Mg(2+) as cofactor. It depends on [4Fe-4S] cluster as a cofactor.

Its subcellular location is the cytoplasm. It carries out the reaction cytidine(32) in tRNA + S-sulfanyl-L-cysteinyl-[cysteine desulfurase] + AH2 + ATP = 2-thiocytidine(32) in tRNA + L-cysteinyl-[cysteine desulfurase] + A + AMP + diphosphate + H(+). It participates in tRNA modification. In terms of biological role, catalyzes the ATP-dependent 2-thiolation of cytidine in position 32 of tRNA, to form 2-thiocytidine (s(2)C32). The sulfur atoms are provided by the cysteine/cysteine desulfurase (IscS) system. The polypeptide is tRNA-cytidine(32) 2-sulfurtransferase (Shewanella frigidimarina (strain NCIMB 400)).